We begin with the raw amino-acid sequence, 261 residues long: Thiazole synthase (261 aa).

Lys101 acts as the Schiff-base intermediate with DXP in catalysis. 1-deoxy-D-xylulose 5-phosphate contacts are provided by residues Gly162, 188-189 (AG), and 210-211 (NT).

This sequence belongs to the ThiG family. Homotetramer. Forms heterodimers with either ThiH or ThiS.

Its subcellular location is the cytoplasm. It catalyses the reaction [ThiS sulfur-carrier protein]-C-terminal-Gly-aminoethanethioate + 2-iminoacetate + 1-deoxy-D-xylulose 5-phosphate = [ThiS sulfur-carrier protein]-C-terminal Gly-Gly + 2-[(2R,5Z)-2-carboxy-4-methylthiazol-5(2H)-ylidene]ethyl phosphate + 2 H2O + H(+). It participates in cofactor biosynthesis; thiamine diphosphate biosynthesis. Catalyzes the rearrangement of 1-deoxy-D-xylulose 5-phosphate (DXP) to produce the thiazole phosphate moiety of thiamine. Sulfur is provided by the thiocarboxylate moiety of the carrier protein ThiS. In vitro, sulfur can be provided by H(2)S. The polypeptide is Thiazole synthase (Aromatoleum aromaticum (strain DSM 19018 / LMG 30748 / EbN1) (Azoarcus sp. (strain EbN1))).